The sequence spans 332 residues: Glycerol-3-phosphate dehydrogenase [NAD(P)+] (332 aa).

Residues W13, K34, and K108 each contribute to the NADPH site. Positions 108, 136, and 138 each coordinate sn-glycerol 3-phosphate. A140 lines the NADPH pocket. Sn-glycerol 3-phosphate-binding residues include K191, D244, S254, R255, and N256. Residue K191 is the Proton acceptor of the active site. Residue R255 coordinates NADPH. Positions 279 and 281 each coordinate NADPH.

Belongs to the NAD-dependent glycerol-3-phosphate dehydrogenase family.

The protein resides in the cytoplasm. It carries out the reaction sn-glycerol 3-phosphate + NAD(+) = dihydroxyacetone phosphate + NADH + H(+). The enzyme catalyses sn-glycerol 3-phosphate + NADP(+) = dihydroxyacetone phosphate + NADPH + H(+). It functions in the pathway membrane lipid metabolism; glycerophospholipid metabolism. In terms of biological role, catalyzes the reduction of the glycolytic intermediate dihydroxyacetone phosphate (DHAP) to sn-glycerol 3-phosphate (G3P), the key precursor for phospholipid synthesis. This is Glycerol-3-phosphate dehydrogenase [NAD(P)+] from Francisella tularensis subsp. tularensis (strain FSC 198).